Reading from the N-terminus, the 462-residue chain is Glutamate-1-semialdehyde 2,1-aminomutase (462 aa).

Residues 178–200 form a disordered region; it reads DDPQRPASPRSQSSRGLPSSPGV. The span at 182 to 192 shows a compositional bias: low complexity; it reads RPASPRSQSSR. At Lys297 the chain carries N6-(pyridoxal phosphate)lysine.

Belongs to the class-III pyridoxal-phosphate-dependent aminotransferase family. HemL subfamily. In terms of assembly, homodimer. Requires pyridoxal 5'-phosphate as cofactor.

Its subcellular location is the cytoplasm. It catalyses the reaction (S)-4-amino-5-oxopentanoate = 5-aminolevulinate. It participates in porphyrin-containing compound metabolism; protoporphyrin-IX biosynthesis; 5-aminolevulinate from L-glutamyl-tRNA(Glu): step 2/2. The protein is Glutamate-1-semialdehyde 2,1-aminomutase (hemL) of Mycobacterium bovis (strain ATCC BAA-935 / AF2122/97).